The sequence spans 727 residues: Kinesin-like protein KIN-14G (727 aa).

Disordered regions lie at residues 100-156, 172-194, and 336-357; these read QTAP…LHLR, HLSAPSRSPTPPPNAVAPSSCSR, and LAGGARSGRRDNPRRQGTGATR. Residues 114–133 show a composition bias toward polar residues; it reads VASSTAGRASRTKSASSTGR. The region spanning 381 to 710 is the Kinesin motor domain; the sequence is NIRVFCRVRP…LRFAARVNSC (330 aa). 461-468 is an ATP binding site; that stretch reads GQTGSGKT.

Belongs to the TRAFAC class myosin-kinesin ATPase superfamily. Kinesin family. KIN-14 subfamily.

This Oryza sativa subsp. japonica (Rice) protein is Kinesin-like protein KIN-14G.